Here is a 355-residue protein sequence, read N- to C-terminus: Protein-glutamate methylesterase/protein-glutamine glutaminase 3 (355 aa).

The region spanning 8 to 123 (SVLIVDDSGM…AREVEDFVDK (116 aa)) is the Response regulatory domain. D59 is modified (4-aspartylphosphate). The segment at 139 to 161 (RSAPAAGPTPVPQAPPPPAAPPA) is disordered. Residues 145 to 159 (GPTPVPQAPPPPAAP) are compositionally biased toward pro residues. In terms of domain architecture, CheB-type methylesterase spans 160–350 (PAGDGGIIAI…ASLLEITGAS (191 aa)). Active-site residues include S172, H199, and D292.

It belongs to the CheB family. Phosphorylated by CheA. Phosphorylation of the N-terminal regulatory domain activates the methylesterase activity.

Its subcellular location is the cytoplasm. The enzyme catalyses [protein]-L-glutamate 5-O-methyl ester + H2O = L-glutamyl-[protein] + methanol + H(+). The catalysed reaction is L-glutaminyl-[protein] + H2O = L-glutamyl-[protein] + NH4(+). In terms of biological role, involved in chemotaxis. Part of a chemotaxis signal transduction system that modulates chemotaxis in response to various stimuli. Catalyzes the demethylation of specific methylglutamate residues introduced into the chemoreceptors (methyl-accepting chemotaxis proteins or MCP) by CheR. Also mediates the irreversible deamidation of specific glutamine residues to glutamic acid. This is Protein-glutamate methylesterase/protein-glutamine glutaminase 3 from Paramagnetospirillum magneticum (strain ATCC 700264 / AMB-1) (Magnetospirillum magneticum).